The chain runs to 6684 residues: Replicase polyprotein 1ab (6684 aa).

Residues 2 to 108 (SSKQFKILVN…DFDLKIARTG (107 aa)) enclose the CoV Nsp1 globular domain. In terms of domain architecture, CoV Nsp2 N-terminal spans 111-349 (AIYVDQYMCG…KSLVACSVKR (239 aa)). Zn(2+) is bound by residues Cys-240, Cys-242, Cys-259, and Cys-260. The segment at 240 to 260 (CPCGSESSGVGDWTGFKTACC) is C4. Positions 378–773 (NVGLLFKKTP…CNAARNDIEI (396 aa)) constitute a CoV Nsp2 middle domain. In terms of domain architecture, CoV Nsp2 C-terminal spans 768-879 (RNDIEIGGIP…VQRMYNKMGG (112 aa)). The Ubiquitin-like 1 domain maps to 882-983 (KTVSFSEEVD…DGIMISQYDI (102 aa)). The segment at 989–1032 (EKSEVSASSEEEEVESVEEDPENEIVEASEGAEGTSSQEEVETV) is disordered. Over residues 997–1015 (SEEEEVESVEEDPENEIVE) the composition is skewed to acidic residues. A Peptidase C16 1 domain is found at 1055–1299 (PWAAAVDVQE…FKVEKVEQQP (245 aa)). Cys-1093 acts as the For PL1-PRO activity in catalysis. A C4-type 1; degenerate zinc finger spans residues 1164–1195 (CGCGEKEIVLERAVFKLTPLKESFNYGVCGDC). Catalysis depends on for PL1-PRO activity residues His-1244 and Asp-1257. The 172-residue stretch at 1318-1489 (NDDLILPFYK…TIENFFSCSI (172 aa)) folds into the Macro domain. A Ubiquitin-like 2 domain is found at 1486 to 1542 (SCSIPVNVTEDNVNHERVSVSFDKTYGEQLKGTVVIKDKDVTNQLPSAFDVGQKVIK). The Peptidase C16 2 domain maps to 1550–1803 (AHYGFRDAAA…KVAASPKIVQ (254 aa)). Residue Cys-1588 is the For PL2-PRO activity of the active site. Zn(2+) is bound by residues Cys-1667, Cys-1670, Cys-1694, and His-1696. Residues 1667–1696 (CDKCAKVEKFVGPVVAAPLAIHGTDETCVH) form a C4-type 2; atypical zinc finger. Active-site for PL2-PRO activity residues include His-1741 and Asp-1754. A helical transmembrane segment spans residues 1896–1916 (LVLLLIAIYNFFYLFVSIPVV). The interval 1896 to 2053 (LVLLLIAIYN…LALKHIVFAC (158 aa)) is HD1. One can recognise a 3Ecto domain in the interval 1905–1970 (NFFYLFVSIP…LQVTWDFKSD (66 aa)). 2 disulfide bridges follow: Cys-1921/Cys-1948 and Cys-1939/Cys-1945. Helical transmembrane passes span 1995–2015 (CFLMYFVSQYLNLWLSYFGYV) and 2033–2053 (FVIVVIVVKAVLALKHIVFAC). Residues 2044 to 2134 (LALKHIVFAC…SVKQTVYATD (91 aa)) are Y1. Residues 2044-2384 (LALKHIVFAC…PYERFTESVS (341 aa)) form the CoV Nsp3 Y domain. The Zn(2+) site is built by His-2048, Cys-2053, Cys-2058, Cys-2061, Cys-2094, His-2097, Cys-2101, and Cys-2104. The segment at 2048–2061 (HIVFACSNPSCKTC) is ZF1. The tract at residues 2094-2104 (CKKHNFYCKNC) is ZF2. The interval 2135 to 2224 (RSHQEVTKVE…IVNSDLLEDL (90 aa)) is Y2. The interval 2135-2384 (RSHQEVTKVE…PYERFTESVS (250 aa)) is coV-Y. The Y3 stretch occupies residues 2225-2281 (SVDFKGALFNAKKNVIKNSFNVDVSECKNLDECYRACNLNVSFSTFEMAVNNAHRFG). The Y4 stretch occupies residues 2282–2384 (ILITDRSFNN…PYERFTESVS (103 aa)). 8 consecutive transmembrane segments (helical) span residues 2401-2421 (IVILVFVFIFICGLCSVYSVA), 2467-2487 (YGFIPTFGKSCPIVVGTVFDL), 2497-2517 (PAYVSIVGRSLVFAINAAFGV), 2538-2558 (CVFNTACTTLTGLGGTIVYCA), 2666-2686 (GAMLVNIIIACLAIAMCYGVL), 2695-2715 (CTFLIVMIIVTLVVNNVSYFV), 2721-2741 (FMIIYAIVYYFITRKLAYPGI), and 2746-2766 (FIIAYINMAPWYVITAYILVF). The HD2 stretch occupies residues 2401–2766 (IVILVFVFIF…YVITAYILVF (366 aa)). Residues 2783 to 2878 (LFEGDKFVGN…PTVSVNSTLQ (96 aa)) enclose the Nsp4C domain. A Peptidase C30 domain is found at 2879–3180 (SGLRKMAQPS…IRQMYGVNLQ (302 aa)). Active-site for 3CL-PRO activity residues include His-2919 and Cys-3022. 8 consecutive transmembrane segments (helical) span residues 3187-3207 (FFYPIMTAMTILFAFWLEFFM), 3217-3237 (TFVSIVLAVTTLISTVFVSGI), 3242-3262 (LFFMSFVLPSVILVTAHNLFW), 3280-3300 (MFLPVDMQGVMLTVFCFIVFV), 3313-3333 (WFSLAVTTILVIFNMVKIFGT), 3347-3367 (FVNMLTMIVSLTTKDWMVVIA), 3371-3391 (IAYYIVVCVMPSAFVSDFGFM), and 3394-3414 (ISIVYMACGYLFCCYYGILYW). An HD3 region spans residues 3187-3414 (FFYPIMTAMT…FCCYYGILYW (228 aa)). A RdRp Nsp7 cofactor domain is found at 3475–3557 (SKLTEMKCTN…SYFENTTILQ (83 aa)). The region spanning 3558-3752 (SVASAYAALP…ITCERTTKLQ (195 aa)) is the RdRp Nsp8 cofactor domain. Residues 3753 to 3863 (NNEIMPGKLK…GYIGATVRLQ (111 aa)) enclose the Nsp9 ssRNA-binding domain. The region spanning 3864-4004 (AGKPTEHPSN…TSMQSFTVDQ (141 aa)) is the ExoN/MTase coactivator domain. Cys-3937, Cys-3940, His-3946, Cys-3953, Cys-3979, Cys-3982, Cys-3990, and Cys-3992 together coordinate Zn(2+). 2 zinc fingers span residues 3937-3953 (CIYCRCHVEHPAIDGLC) and 3979-3992 (CVVCGCWLNNGCMC). Residues 4006-4255 (YLNRVRGSSA…ESENFVKSDI (250 aa)) form the NiRAN domain. One can recognise a Nsp12 Interface domain in the interval 4261-4359 (KQYDLLAYDF…WNLDVKLDTM (99 aa)). Positions 4290, 4296, 4301, 4305, and 4482 each coordinate Zn(2+). The 568-residue stretch at 4360-4927 (KLSMTDLLRF…SLYEKSTVLQ (568 aa)) folds into the Nsp12 RNA-dependent RNA polymerase domain. The segment at 4362-4576 (SMTDLLRFVT…HQKHLKSIAA (215 aa)) is rdRp Fingers N-ter. A rdRp Palm N-ter region spans residues 4577–4615 (TRNATVVIGSTKFYGGWDNMLKNLMRDVDNGCLMGWDYP). Residues 4607 to 4769 (GCLMGWDYPK…CYNKDYADLG (163 aa)) form the RdRp catalytic domain. Residues 4616 to 4674 (KCDRALPNMIRMASAMILGSKHVGCCTHNDRFYRLSNELAQVLTEVVHCTGGFYFKPGG) are rdRp Fingers C-ter. Zn(2+) contacts are provided by His-4637, Cys-4640, and Cys-4641. A rdRp Palm C-ter region spans residues 4675-4810 (TTSGDGTTAY…SVGPHEFCSQ (136 aa)). Catalysis depends on residues Ser-4754, Asp-4755, and Asp-4756. The interval 4811-4927 (HTLQIVGPDG…SLYEKSTVLQ (117 aa)) is rdRp Thumb. Residues 4928 to 5040 (AAGMCVVCGS…EDFNKLAVSD (113 aa)) enclose the CV ZBD domain. Positions 4932, 4935, 4943, 4946, 4953, 4956, 4960, 4966, 4977, 4982, 4999, and 5002 each coordinate Zn(2+). Residues 5175–5366 (NTISKLYPVF…MCTLGPDVFL (192 aa)) form the (+)RNA virus helicase ATP-binding domain. 5210-5217 (GPPGSGKS) serves as a coordination point for ATP. Positions 5367–5536 (HKCYRCPAEI…AKPETCGLFK (170 aa)) constitute a (+)RNA virus helicase C-terminal domain. One can recognise an ExoN domain in the interval 5598 to 5812 (LFCTRDFAMR…RCLAIHDCFV (215 aa)). Residues Asp-5616, Glu-5618, and Glu-5717 contribute to the active site. Cys-5733, Cys-5735, Cys-5751, His-5754, His-5782, Cys-5786, and His-5789 together coordinate Zn(2+). Residues His-5793 and Asp-5798 contribute to the active site. Cys-5804 contributes to the Zn(2+) binding site. An N7-MTase domain is found at 5821–6042 (YPFIDNEEKI…MLWHGFVNSK (222 aa)). Position 5856–5862 (5856–5862 (DVGNPKG)) interacts with S-adenosyl-L-methionine. Positions 5933 to 5947 (CNGGALYVNNHAFHT) are gpppA-binding. Positions 5971, 5988, 5999, and 6002 each coordinate Zn(2+). Positions 6046–6106 (SLENVAFNVV…NVAFELYAKR (61 aa)) constitute a Nsp15 N-terminal oligomerization domain. The AV-Nsp11N/CoV-Nsp15M domain occupies 6107–6224 (KLGLTPPLTI…IYVRKNGEYV (118 aa)). In terms of domain architecture, NendoU spans 6241–6381 (KPRSTMEEDF…ENSHIKTFYP (141 aa)). Catalysis depends on residues His-6271, His-6286, Lys-6327, Lys-6429, Asp-6513, Lys-6553, and Glu-6586. A Nidovirus-type SAM-dependent 2'-O-MTase domain is found at 6385 to 6681 (SAEWNPGYSM…KLLNFGNHFV (297 aa)).

This sequence belongs to the coronaviruses polyprotein 1ab family. 3CL-PRO exists as monomer and homodimer. Eight copies of nsp7 and eight copies of nsp8 assemble to form a heterohexadecamer. Nsp9 is a dimer. Nsp10 forms a dodecamer. The cofactor is Mn(2+). Specific enzymatic cleavages in vivo by its own proteases yield mature proteins. 3CL-PRO is autocatalytically processed.

Its subcellular location is the host membrane. The protein resides in the host cytoplasm. It localises to the host perinuclear region. The protein localises to the host endoplasmic reticulum-Golgi intermediate compartment. The enzyme catalyses Thiol-dependent hydrolysis of ester, thioester, amide, peptide and isopeptide bonds formed by the C-terminal Gly of ubiquitin (a 76-residue protein attached to proteins as an intracellular targeting signal).. It carries out the reaction RNA(n) + a ribonucleoside 5'-triphosphate = RNA(n+1) + diphosphate. It catalyses the reaction ATP + H2O = ADP + phosphate + H(+). The catalysed reaction is a 5'-end diphospho-ribonucleoside in mRNA + GTP + H(+) = a 5'-end (5'-triphosphoguanosine)-ribonucleoside in mRNA + diphosphate. The enzyme catalyses a 5'-end (N(7)-methyl 5'-triphosphoguanosine)-ribonucleoside in mRNA + S-adenosyl-L-methionine = a 5'-end (N(7)-methyl 5'-triphosphoguanosine)-(2'-O-methyl-ribonucleoside) in mRNA + S-adenosyl-L-homocysteine + H(+). It carries out the reaction uridylyl-uridylyl-ribonucleotide-RNA = a 3'-end uridylyl-2',3'-cyclophospho-uridine-RNA + a 5'-end dephospho-ribonucleoside-RNA. In terms of biological role, the replicase polyprotein of coronaviruses is a multifunctional protein: it contains the activities necessary for the transcription of negative stranded RNA, leader RNA, subgenomic mRNAs and progeny virion RNA as well as proteinases responsible for the cleavage of the polyprotein into functional products. Its function is as follows. Non-structural protein 1 inhibits host translation. By suppressing host gene expression, nsp1 facilitates efficient viral gene expression in infected cells and evasion from host immune response. Functionally, the papain-like proteinase 1 (PLP1) and papain-like proteinase 2 (PLP2) are responsible for the cleavages located at the N-terminus of the replicase polyprotein. In addition, PLP2 possesses a deubiquitinating/deISGylating activity and processes both 'Lys-48'- and 'Lys-63'-linked polyubiquitin chains from cellular substrates. PLP2 also antagonizes innate immune induction of type I interferon by blocking the nuclear translocation of host IRF-3. Responsible for the majority of cleavages as it cleaves the C-terminus of replicase polyprotein at 11 sites. Recognizes substrates containing the core sequence [ILMVF]-Q-|-[SAGC]. Inhibited by the substrate-analog Cbz-Val-Asn-Ser-Thr-Leu-Gln-CMK. In terms of biological role, the helicase which contains a zinc finger structure displays RNA and DNA duplex-unwinding activities with 5' to 3' polarity. ATPase activity is strongly stimulated by poly(U), poly(dT), poly(C), poly(dA), but not by poly(G). Its function is as follows. The exoribonuclease acts on both ssRNA and dsRNA in a 3' to 5' direction. Functionally, nsp7-nsp8 hexadecamer may possibly confer processivity to the polymerase, maybe by binding to dsRNA or by producing primers utilized by the latter. Forms a primer, NSP9-pU, which is utilized by the polymerase for the initiation of RNA chains. Interacts with ribosome signal recognition particle RNA (SRP). Together with NSP8, suppress protein integration into the cell membrane, thereby disrupting host immune defenses. In terms of biological role, RNA-directed RNA polymerase that catalyzes the transcription of viral genomic and subgenomic RNAs. Acts in complex with nsp7 and nsp8 to transcribe both the minus and positive strands of genomic RNA. The kinase-like NiRAN domain of NSP12 attaches one or more nucleotides to the amino terminus of NSP9, forming a covalent RNA-protein intermediate that serves as transcription/replication primer. Subgenomic RNAs (sgRNAs) are formed by discontinuous transcription: The polymerase has the ability to pause at transcription-regulating sequences (TRS) and jump to the leader TRS, resulting in a major deletion. This creates a series of subgenomic RNAs that are replicated, transcribed and translated. In addition, Nsp12 is a subunit of the viral RNA capping enzyme that catalyzes the RNA guanylyltransferase reaction for genomic and sub-genomic RNAs. Subsequently, the NiRAN domain transfers RNA to GDP, and forms the core cap structure GpppA-RNA. Its function is as follows. Plays a role in viral transcription/replication and prevents the simultaneous activation of host cell dsRNA sensors, such as MDA5/IFIH1, OAS, and PKR. Acts by degrading the 5'-polyuridines generated during replication of the poly(A) region of viral genomic and subgenomic RNAs. Catalyzes a two-step reaction in which a 2'3'-cyclic phosphate (2'3'-cP) is first generated by 2'-O transesterification, which is then hydrolyzed to a 3'-phosphate (3'-P). If not degraded, poly(U) RNA would hybridize with poly(A) RNA tails and activate host dsRNA sensors. The chain is Replicase polyprotein 1ab (rep) from Sus scrofa (Pig).